Consider the following 175-residue polypeptide: Nicotinamide-nucleotide adenylyltransferase 1 (175 aa).

It belongs to the archaeal NMN adenylyltransferase family.

Its subcellular location is the cytoplasm. It carries out the reaction beta-nicotinamide D-ribonucleotide + ATP + H(+) = diphosphate + NAD(+). The protein operates within cofactor biosynthesis; NAD(+) biosynthesis; NAD(+) from nicotinamide D-ribonucleotide: step 1/1. In Sulfolobus acidocaldarius (strain ATCC 33909 / DSM 639 / JCM 8929 / NBRC 15157 / NCIMB 11770), this protein is Nicotinamide-nucleotide adenylyltransferase 1.